The following is a 253-amino-acid chain: Trans-aconitate 2-methyltransferase (253 aa).

It belongs to the methyltransferase superfamily. Tam family.

Its subcellular location is the cytoplasm. The catalysed reaction is trans-aconitate + S-adenosyl-L-methionine = (E)-3-(methoxycarbonyl)pent-2-enedioate + S-adenosyl-L-homocysteine. Functionally, catalyzes the S-adenosylmethionine monomethyl esterification of trans-aconitate. This is Trans-aconitate 2-methyltransferase from Klebsiella pneumoniae (strain 342).